Consider the following 274-residue polypeptide: Shikimate dehydrogenase (NADP(+)) (274 aa).

Residues 14-16 and Thr-60 each bind shikimate; that span reads SKS. Lys-64 serves as the catalytic Proton acceptor. Residue Glu-76 coordinates NADP(+). Shikimate is bound by residues Asn-85 and Asp-101. NADP(+) is bound by residues 126–130, 150–155, and Met-214; these read GAGGA and NRTARK. Tyr-216 is a shikimate binding site. Gly-238 contacts NADP(+).

It belongs to the shikimate dehydrogenase family. In terms of assembly, homodimer.

The enzyme catalyses shikimate + NADP(+) = 3-dehydroshikimate + NADPH + H(+). It participates in metabolic intermediate biosynthesis; chorismate biosynthesis; chorismate from D-erythrose 4-phosphate and phosphoenolpyruvate: step 4/7. Involved in the biosynthesis of the chorismate, which leads to the biosynthesis of aromatic amino acids. Catalyzes the reversible NADPH linked reduction of 3-dehydroshikimate (DHSA) to yield shikimate (SA). In Pseudomonas aeruginosa (strain ATCC 15692 / DSM 22644 / CIP 104116 / JCM 14847 / LMG 12228 / 1C / PRS 101 / PAO1), this protein is Shikimate dehydrogenase (NADP(+)).